We begin with the raw amino-acid sequence, 133 residues long: T-cell receptor beta chain V region 86T1 (133 aa).

A signal peptide spans 1–21 (MSCRLLLYVSLCLVETALMNT). The segment at 22–113 (KITQSPRYLI…SAVYFCASSH (92 aa)) is v segment. N36 and N75 each carry an N-linked (GlcNAc...) asparagine glycan. A disulfide bond links C41 and C109. The interval 114–133 (GQGVSGNTLYFGEGSRLIVV) is j segment.

This is T-cell receptor beta chain V region 86T1 from Mus musculus (Mouse).